Here is a 176-residue protein sequence, read N- to C-terminus: Interleukin-20 (176 aa).

The first 24 residues, 1 to 24, serve as a signal peptide directing secretion; sequence MKGFGLAFGLFSAVGFLLWTPLTG. Disulfide bonds link C33–C126, C80–C132, and C81–C134.

The protein belongs to the IL-10 family. In terms of assembly, forms a 1:1:1 heterotrimeric complex with its primary high-affinity heterodimeric receptor IL20RA/IL20RB.

It is found in the secreted. In terms of biological role, pro-inflammatory and angiogenic cytokine mainly secreted by monocytes and skin keratinocytes that plays crucial roles in immune responses, regulation of inflammatory responses, hemopoiesis, as well as epidermal cell and keratinocyte differentiation. Enhances tissue remodeling and wound-healing activities and restores the homeostasis of epithelial layers during infection and inflammatory responses to maintain tissue integrity. Affects multiple actin-mediated functions in activated neutrophils leading to inhibition of phagocytosis, granule exocytosis, and migration. Exert its effects via the type I IL-20 receptor complex consisting of IL20RA and IL20RB. Alternatively, can mediate its activity through a second receptor complex called type II IL-20 receptor complex composed of IL22RA1 and IL20RB. Acts as an arteriogenic and vascular remodeling factory by activating a range of signaling processes including phosphorylations of JAK2 and STAT5 as well as activation of the serine and threonine kinases AKT and ERK1/2. Alternatively, can activate STAT3 phosphorylation and transcriptional activity in a JAK2, ERK1/2 and p38 MAPK-dependent manner in keratinocytes. This chain is Interleukin-20 (Il20), found in Mus musculus (Mouse).